An 896-amino-acid polypeptide reads, in one-letter code: Protein translocase subunit SecA (896 aa).

ATP is bound by residues Gln-87, 105-109 (GEGKT), and Asp-512. Disordered stretches follow at residues 565-584 (RRID…PGSS) and 840-896 (EAAQ…AHEA). Positions 876, 878, 887, and 888 each coordinate Zn(2+). The segment covering 882-896 (KKYKHCHGNRAAHEA) has biased composition (basic residues).

Belongs to the SecA family. Monomer and homodimer. Part of the essential Sec protein translocation apparatus which comprises SecA, SecYEG and auxiliary proteins SecDF-YajC and YidC. It depends on Zn(2+) as a cofactor.

The protein resides in the cell inner membrane. The protein localises to the cytoplasm. The enzyme catalyses ATP + H2O + cellular proteinSide 1 = ADP + phosphate + cellular proteinSide 2.. Functionally, part of the Sec protein translocase complex. Interacts with the SecYEG preprotein conducting channel. Has a central role in coupling the hydrolysis of ATP to the transfer of proteins into and across the cell membrane, serving both as a receptor for the preprotein-SecB complex and as an ATP-driven molecular motor driving the stepwise translocation of polypeptide chains across the membrane. In Mannheimia succiniciproducens (strain KCTC 0769BP / MBEL55E), this protein is Protein translocase subunit SecA.